The sequence spans 316 residues: Pantothenate kinase (316 aa).

95-102 provides a ligand contact to ATP; sequence GSVAVGKS.

It belongs to the prokaryotic pantothenate kinase family.

Its subcellular location is the cytoplasm. The catalysed reaction is (R)-pantothenate + ATP = (R)-4'-phosphopantothenate + ADP + H(+). It participates in cofactor biosynthesis; coenzyme A biosynthesis; CoA from (R)-pantothenate: step 1/5. The chain is Pantothenate kinase from Escherichia coli O17:K52:H18 (strain UMN026 / ExPEC).